The chain runs to 506 residues: Thyroid hormone receptor alpha (506 aa).

The interval 1 to 32 (MEQKPSKVECGSDPEENSARSPDGKRKRKNGQ) is disordered. The segment at 1–52 (MEQKPSKVECGSDPEENSARSPDGKRKRKNGQCSLKTSMSGYIPSYLDKDEQ) is modulating. The Zn(2+) site is built by Cys-53, Cys-56, Cys-70, Cys-73, Cys-91, Cys-97, Cys-107, and Cys-110. NR C4-type zinc fingers lie at residues 53–73 (CVVC…CEGC) and 91–115 (CKYD…FKKC). The segment at residues 53–127 (CVVCGDKATG…VGMAMDLVLD (75 aa)) is a DNA-binding region (nuclear receptor). Positions 163–407 (EEWDLIHVAT…EGQQLLGMHV (245 aa)) constitute an NR LBD domain. Residues Arg-228 and Ser-277 each coordinate 3,3',5-triiodo-L-thyronine. The segment at 460-506 (GEDDSSEAGSLTSSDEDPEVCEDAAQATQPLPEAPPRADGEGGGGGS) is disordered.

It belongs to the nuclear hormone receptor family. NR1 subfamily. As to quaternary structure, binds DNA as a dimer; homodimer and heterodimer with RXRB. Interacts with NCOA3 and NCOA6 coactivators, leading to a strong increase of transcription of target genes. Probably interacts with SFPQ. Interacts with C1D. Interacts with AKAP13. Interacts with TP53INP2. Interacts with PER2. Interacts with PER2. Isoform alpha-2 and isoform alpha-1 interact with TACC1, but the interaction with alpha-1 is weaker. The interaction with isoform alpha-1, but not alpha-2, is decreased in the presence of thyroid hormone T3.

It is found in the nucleus. Its subcellular location is the cytoplasm. Functionally, nuclear hormone receptor that can act as a repressor or activator of transcription. High affinity receptor for thyroid hormones, including triiodothyronine and thyroxine. This chain is Thyroid hormone receptor alpha (THRA), found in Sus scrofa (Pig).